Consider the following 184-residue polypeptide: dCTP deaminase (184 aa).

DCTP contacts are provided by residues 97–102 and aspartate 113; that span reads RSTFAR. Glutamate 123 acts as the Proton donor/acceptor in catalysis. Positions 155 and 162 each coordinate dCTP.

The protein belongs to the dCTP deaminase family. In terms of assembly, homotrimer.

It carries out the reaction dCTP + H2O + H(+) = dUTP + NH4(+). It functions in the pathway pyrimidine metabolism; dUMP biosynthesis; dUMP from dCTP (dUTP route): step 1/2. Its function is as follows. Catalyzes the deamination of dCTP to dUTP. The polypeptide is dCTP deaminase (Saccharolobus solfataricus (strain ATCC 35092 / DSM 1617 / JCM 11322 / P2) (Sulfolobus solfataricus)).